The sequence spans 290 residues: Glycine--tRNA ligase alpha subunit (290 aa).

It belongs to the class-II aminoacyl-tRNA synthetase family. Tetramer of two alpha and two beta subunits.

It localises to the cytoplasm. The catalysed reaction is tRNA(Gly) + glycine + ATP = glycyl-tRNA(Gly) + AMP + diphosphate. This Desulfotalea psychrophila (strain LSv54 / DSM 12343) protein is Glycine--tRNA ligase alpha subunit.